A 181-amino-acid chain; its full sequence is Mytilin-1 (181 aa).

A signal peptide spans Met1–Thr22.

As to expression, component of the organic matrix of calcified shell layers like nacre and prisms.

The protein resides in the secreted. The polypeptide is Mytilin-1 (Mytilus galloprovincialis (Mediterranean mussel)).